A 454-amino-acid polypeptide reads, in one-letter code: tRNA modification GTPase MnmE (454 aa).

3 residues coordinate (6S)-5-formyl-5,6,7,8-tetrahydrofolate: arginine 23, glutamate 80, and lysine 120. The region spanning 216–377 (GMKVVIAGRP…LRNNLKQSMG (162 aa)) is the TrmE-type G domain. Asparagine 226 lines the K(+) pocket. Residues 226 to 231 (NAGKSS), 245 to 251 (TDIAGTT), 270 to 273 (DTAG), 335 to 338 (NKAD), and 358 to 360 (SAR) contribute to the GTP site. Serine 230 lines the Mg(2+) pocket. K(+) is bound by residues threonine 245, isoleucine 247, and threonine 250. Position 251 (threonine 251) interacts with Mg(2+). Lysine 454 lines the (6S)-5-formyl-5,6,7,8-tetrahydrofolate pocket.

Belongs to the TRAFAC class TrmE-Era-EngA-EngB-Septin-like GTPase superfamily. TrmE GTPase family. In terms of assembly, homodimer. Heterotetramer of two MnmE and two MnmG subunits. Requires K(+) as cofactor.

The protein resides in the cytoplasm. In terms of biological role, exhibits a very high intrinsic GTPase hydrolysis rate. Involved in the addition of a carboxymethylaminomethyl (cmnm) group at the wobble position (U34) of certain tRNAs, forming tRNA-cmnm(5)s(2)U34. The polypeptide is tRNA modification GTPase MnmE (Salmonella paratyphi A (strain AKU_12601)).